The primary structure comprises 149 residues: MERTFLMIKPDAVQRNLIGEIISRIEKKGLKLVGGKFMQVPMELAEKHYSEHEGKPFYDKLISFITSAPVFAMVVEGENAVAVSRKIIGSTNPSEAAPGTIRGDYGLNLGRNIIHGSDSTESAQREVKLWFTSSEIADYKEPREDWLYE.

6 residues coordinate ATP: Lys-9, Phe-57, Arg-85, Thr-91, Arg-102, and Asn-112. His-115 functions as the Pros-phosphohistidine intermediate in the catalytic mechanism.

Belongs to the NDK family. As to quaternary structure, homotetramer. Mg(2+) is required as a cofactor.

It localises to the cytoplasm. The catalysed reaction is a 2'-deoxyribonucleoside 5'-diphosphate + ATP = a 2'-deoxyribonucleoside 5'-triphosphate + ADP. It catalyses the reaction a ribonucleoside 5'-diphosphate + ATP = a ribonucleoside 5'-triphosphate + ADP. Functionally, major role in the synthesis of nucleoside triphosphates other than ATP. The ATP gamma phosphate is transferred to the NDP beta phosphate via a ping-pong mechanism, using a phosphorylated active-site intermediate. The polypeptide is Nucleoside diphosphate kinase (Staphylococcus epidermidis (strain ATCC 35984 / DSM 28319 / BCRC 17069 / CCUG 31568 / BM 3577 / RP62A)).